Reading from the N-terminus, the 48-residue chain is Large ribosomal subunit protein eL40 (48 aa).

It belongs to the eukaryotic ribosomal protein eL40 family.

The polypeptide is Large ribosomal subunit protein eL40 (Methanocella arvoryzae (strain DSM 22066 / NBRC 105507 / MRE50)).